Here is a 198-residue protein sequence, read N- to C-terminus: Protein GrpE (198 aa).

The protein belongs to the GrpE family. Homodimer.

Its subcellular location is the cytoplasm. Participates actively in the response to hyperosmotic and heat shock by preventing the aggregation of stress-denatured proteins, in association with DnaK and GrpE. It is the nucleotide exchange factor for DnaK and may function as a thermosensor. Unfolded proteins bind initially to DnaJ; upon interaction with the DnaJ-bound protein, DnaK hydrolyzes its bound ATP, resulting in the formation of a stable complex. GrpE releases ADP from DnaK; ATP binding to DnaK triggers the release of the substrate protein, thus completing the reaction cycle. Several rounds of ATP-dependent interactions between DnaJ, DnaK and GrpE are required for fully efficient folding. In Vibrio harveyi (Beneckea harveyi), this protein is Protein GrpE.